Consider the following 173-residue polypeptide: Large ribosomal subunit protein uL10 (173 aa).

The protein belongs to the universal ribosomal protein uL10 family. In terms of assembly, part of the ribosomal stalk of the 50S ribosomal subunit. The N-terminus interacts with L11 and the large rRNA to form the base of the stalk. The C-terminus forms an elongated spine to which L12 dimers bind in a sequential fashion forming a multimeric L10(L12)X complex.

In terms of biological role, forms part of the ribosomal stalk, playing a central role in the interaction of the ribosome with GTP-bound translation factors. In Christiangramia forsetii (strain DSM 17595 / CGMCC 1.15422 / KT0803) (Gramella forsetii), this protein is Large ribosomal subunit protein uL10.